The chain runs to 388 residues: tRNA-specific 2-thiouridylase MnmA (388 aa).

Residues 26-33 (GLSGGVDS) and Leu-52 contribute to the ATP site. The active-site Nucleophile is the Cys-113. The cysteines at positions 113 and 223 are disulfide-linked. ATP is bound at residue Gly-138. The interaction with tRNA stretch occupies residues 173–175 (KDQ). Cys-223 acts as the Cysteine persulfide intermediate in catalysis. An interaction with tRNA region spans residues 328–329 (RY).

The protein belongs to the MnmA/TRMU family.

It is found in the cytoplasm. The enzyme catalyses S-sulfanyl-L-cysteinyl-[protein] + uridine(34) in tRNA + AH2 + ATP = 2-thiouridine(34) in tRNA + L-cysteinyl-[protein] + A + AMP + diphosphate + H(+). In terms of biological role, catalyzes the 2-thiolation of uridine at the wobble position (U34) of tRNA, leading to the formation of s(2)U34. The protein is tRNA-specific 2-thiouridylase MnmA of Prochlorococcus marinus (strain NATL2A).